The sequence spans 327 residues: Altered inheritance rate of mitochondria protein 25 (327 aa).

It belongs to the phospholipid scramblase family.

It is found in the mitochondrion. The polypeptide is Altered inheritance rate of mitochondria protein 25 (AIM25) (Saccharomyces cerevisiae (strain ATCC 204508 / S288c) (Baker's yeast)).